The primary structure comprises 216 residues: Small ribosomal subunit protein uS4 (216 aa).

An S4 RNA-binding domain is found at Arg-111 to Glu-175. Positions Val-194–Arg-216 are disordered. Basic and acidic residues predominate over residues Lys-198–Gly-208.

It belongs to the universal ribosomal protein uS4 family. In terms of assembly, part of the 30S ribosomal subunit. Contacts protein S5. The interaction surface between S4 and S5 is involved in control of translational fidelity.

Functionally, one of the primary rRNA binding proteins, it binds directly to 16S rRNA where it nucleates assembly of the body of the 30S subunit. In terms of biological role, with S5 and S12 plays an important role in translational accuracy. In Methanosarcina barkeri (strain Fusaro / DSM 804), this protein is Small ribosomal subunit protein uS4.